We begin with the raw amino-acid sequence, 376 residues long: 1-deoxy-D-xylulose 5-phosphate reductoisomerase (376 aa).

The NADPH site is built by T12, G13, S14, I15, N39, and N116. Position 117 (K117) interacts with 1-deoxy-D-xylulose 5-phosphate. E118 serves as a coordination point for NADPH. D142 contacts Mn(2+). 1-deoxy-D-xylulose 5-phosphate contacts are provided by S143, E144, S164, and H187. E144 contributes to the Mn(2+) binding site. Position 193 (G193) interacts with NADPH. Residues S200, N205, K206, and E209 each coordinate 1-deoxy-D-xylulose 5-phosphate. Residue E209 participates in Mn(2+) binding.

This sequence belongs to the DXR family. Mg(2+) is required as a cofactor. It depends on Mn(2+) as a cofactor.

It carries out the reaction 2-C-methyl-D-erythritol 4-phosphate + NADP(+) = 1-deoxy-D-xylulose 5-phosphate + NADPH + H(+). The protein operates within isoprenoid biosynthesis; isopentenyl diphosphate biosynthesis via DXP pathway; isopentenyl diphosphate from 1-deoxy-D-xylulose 5-phosphate: step 1/6. Functionally, catalyzes the NADPH-dependent rearrangement and reduction of 1-deoxy-D-xylulose-5-phosphate (DXP) to 2-C-methyl-D-erythritol 4-phosphate (MEP). The polypeptide is 1-deoxy-D-xylulose 5-phosphate reductoisomerase (Thermotoga maritima (strain ATCC 43589 / DSM 3109 / JCM 10099 / NBRC 100826 / MSB8)).